The sequence spans 178 residues: Cell division protein SepF (178 aa).

Over residues 21 to 46 (YESEQSVATHHDEERPQAQEREERRA) the composition is skewed to basic and acidic residues. Positions 21–65 (YESEQSVATHHDEERPQAQEREERRAPAPVREVVREMPTVDAEEE) are disordered.

Belongs to the SepF family. Homodimer. Interacts with FtsZ.

The protein localises to the cytoplasm. In terms of biological role, cell division protein that is part of the divisome complex and is recruited early to the Z-ring. Probably stimulates Z-ring formation, perhaps through the cross-linking of FtsZ protofilaments. Its function overlaps with FtsA. The protein is Cell division protein SepF of Paenarthrobacter aurescens (strain TC1).